The primary structure comprises 71 residues: Phosphatidylinositol N-acetylglucosaminyltransferase subunit Y (71 aa).

Residue Met1 is a topological domain, cytoplasmic. A helical membrane pass occupies residues 2-21 (FFSLPVLTVLIPLVSLTGLL). Over 22–44 (YSASVEEDFPNGCTSTASLCFYS) the chain is Lumenal. The helical transmembrane segment at 45–65 (LLLPITLPVYVFFHLWTWMGL) threads the bilayer. Residues 66–71 (KLFRHN) are Cytoplasmic-facing.

As to quaternary structure, component of the glycosylphosphatidylinositol-N-acetylglucosaminyltransferase (GPI-GnT) complex composed at least by PIGA, PIGC, PIGH, PIGP, PIGQ, PIGY and DPM2.

The protein resides in the endoplasmic reticulum membrane. The protein operates within glycolipid biosynthesis; glycosylphosphatidylinositol-anchor biosynthesis. In terms of biological role, part of the glycosylphosphatidylinositol-N-acetylglucosaminyltransferase (GPI-GnT) complex that catalyzes the transfer of N-acetylglucosamine from UDP-N-acetylglucosamine to phosphatidylinositol and participates in the first step of GPI biosynthesis. May act by regulating the catalytic subunit PIGA. In Xenopus tropicalis (Western clawed frog), this protein is Phosphatidylinositol N-acetylglucosaminyltransferase subunit Y.